A 669-amino-acid polypeptide reads, in one-letter code: DNA ligase (669 aa).

NAD(+) contacts are provided by residues 32–36 (DAEYD), 81–82 (SL), and E113. K115 serves as the catalytic N6-AMP-lysine intermediate. Residues R136, E173, K290, and K314 each coordinate NAD(+). Residues C408, C411, C426, and C432 each contribute to the Zn(2+) site. The BRCT domain occupies 592-669 (AVDSALAGKI…DEQALIEFLK (78 aa)).

It belongs to the NAD-dependent DNA ligase family. LigA subfamily. Requires Mg(2+) as cofactor. It depends on Mn(2+) as a cofactor.

The enzyme catalyses NAD(+) + (deoxyribonucleotide)n-3'-hydroxyl + 5'-phospho-(deoxyribonucleotide)m = (deoxyribonucleotide)n+m + AMP + beta-nicotinamide D-nucleotide.. In terms of biological role, DNA ligase that catalyzes the formation of phosphodiester linkages between 5'-phosphoryl and 3'-hydroxyl groups in double-stranded DNA using NAD as a coenzyme and as the energy source for the reaction. It is essential for DNA replication and repair of damaged DNA. This is DNA ligase from Vibrio cholerae serotype O1 (strain ATCC 39315 / El Tor Inaba N16961).